We begin with the raw amino-acid sequence, 217 residues long: MTAPLTLALSKGRIFEETLPLLAAAGVQVTEDPETSRKLILPTTNPDLRVIIVRASDVPTYVEYGAADFGVAGKDVLVEHGGSGLYQPIDLNIARCRMSVAVSAGFDYASAVRQGARLRVATKYVETAREHFAAKGVHVDLIKLYGSMELAPLVGLADAIVDLVSSGGTLKANNLVEVEEIMAISSRLVVNQAALKLKRAALKPILDAFERASQNGG.

It belongs to the ATP phosphoribosyltransferase family. Short subfamily. As to quaternary structure, heteromultimer composed of HisG and HisZ subunits.

It localises to the cytoplasm. It catalyses the reaction 1-(5-phospho-beta-D-ribosyl)-ATP + diphosphate = 5-phospho-alpha-D-ribose 1-diphosphate + ATP. Its pathway is amino-acid biosynthesis; L-histidine biosynthesis; L-histidine from 5-phospho-alpha-D-ribose 1-diphosphate: step 1/9. Functionally, catalyzes the condensation of ATP and 5-phosphoribose 1-diphosphate to form N'-(5'-phosphoribosyl)-ATP (PR-ATP). Has a crucial role in the pathway because the rate of histidine biosynthesis seems to be controlled primarily by regulation of HisG enzymatic activity. This is ATP phosphoribosyltransferase from Burkholderia orbicola (strain MC0-3).